The following is a 521-amino-acid chain: 2-isopropylmalate synthase (521 aa).

Positions 12-274 (VIIFDTTLRD…WNKIDTTMLT (263 aa)) constitute a Pyruvate carboxyltransferase domain. Residues aspartate 21, histidine 209, histidine 211, and asparagine 245 each coordinate Mn(2+). A regulatory domain region spans residues 398–521 (KLLSLTVIAG…DLPVPEAAAS (124 aa)).

This sequence belongs to the alpha-IPM synthase/homocitrate synthase family. LeuA type 1 subfamily. In terms of assembly, homodimer. Mn(2+) is required as a cofactor.

It is found in the cytoplasm. The catalysed reaction is 3-methyl-2-oxobutanoate + acetyl-CoA + H2O = (2S)-2-isopropylmalate + CoA + H(+). The protein operates within amino-acid biosynthesis; L-leucine biosynthesis; L-leucine from 3-methyl-2-oxobutanoate: step 1/4. In terms of biological role, catalyzes the condensation of the acetyl group of acetyl-CoA with 3-methyl-2-oxobutanoate (2-ketoisovalerate) to form 3-carboxy-3-hydroxy-4-methylpentanoate (2-isopropylmalate). The sequence is that of 2-isopropylmalate synthase from Rhodopseudomonas palustris (strain BisB18).